Here is a 508-residue protein sequence, read N- to C-terminus: MLLWSLLVIFDAVTEQADSLTLVAPSSVFEGDSIVLKCQGEQNWKIQKMAYHKDNKELSVFKKFSDFLIQSAVLSDSGNYFCSTKGQLFLWDKTSNIVKIKVQELFQRPVLTASSFQPIEGGPVSLKCETRLSPQRLDVQLQFCFFRENQVLGSGWSSSPELQISAVWSEDTGSYWCKAETVTHRIRKQSLQSQIHVQRIPISNVSLEIRAPGGQVTEGQKLILLCSVAGGTGNVTFSWYREATGTSMGKKTQRSLSAELEIPAVKESDAGKYYCRADNGHVPIQSKVVNIPVRIPVSRPVLTLRSPGAQAAVGDLLELHCEALRGSPPILYQFYHEDVTLGNSSAPSGGGASFNLSLTAEHSGNYSCEANNGLGAQCSEAVPVSISGPDGYRRDLMTAGVLWGLFGVLGFTGVALLLYALFHKISGESSATNEPRGASRPNPQEFTYSSPTPDMEELQPVYVNVGSVDVDVVYSQVWSMQQPESSANIRTLLENKDSQVIYSSVKKS.

The first 19 residues, 1 to 19 (MLLWSLLVIFDAVTEQADS), serve as a signal peptide directing secretion. 4 consecutive Ig-like C2-type domains span residues 20 to 98 (LTLV…SNIV), 109 to 187 (PVLT…HRIR), 201 to 290 (PISN…KVVN), and 300 to 387 (PVLT…VSIS). Residues 20–401 (LTLVAPSSVF…YRRDLMTAGV (382 aa)) are Extracellular-facing. A disulfide bond links Cys128 and Cys177. 5 N-linked (GlcNAc...) asparagine glycosylation sites follow: Asn204, Asn234, Asn343, Asn355, and Asn365. Intrachain disulfides connect Cys226/Cys275 and Cys321/Cys368. A helical transmembrane segment spans residues 402-422 (LWGLFGVLGFTGVALLLYALF). Over 423–508 (HKISGESSAT…QVIYSSVKKS (86 aa)) the chain is Cytoplasmic. The segment at 429–453 (SSATNEPRGASRPNPQEFTYSSPTP) is disordered. The segment covering 441-452 (PNPQEFTYSSPT) has biased composition (polar residues). 4 short sequence motifs (ITIM motif) span residues 446 to 451 (FTYSSP), 460 to 465 (PVYVNV), 472 to 477 (VVYSQV), and 500 to 505 (VIYSSV).

The tyrosine-phosphorylated isoform 2 interacts with PTPN6. Isoform 2 is N- and O-glycosylated, and phosphorylated. Expressed in the secondary lymphoid organs, spleen and lymph node. Expression is limited to the mature B-cell lines. Highly expressed in CD19 and within the mantle zones of the tonsil tissue. Isoform 2 is expressed in the spleen, peripheral blood and bone marrow. Isoform 2 and isoform 4 are expressed in B-cell lines. Preferentially expressed in memory B-cells (at protein level).

Its subcellular location is the cell membrane. In terms of biological role, may have an regulatory role in normal and neoplastic B cell development. The chain is Fc receptor-like protein 2 (FCRL2) from Homo sapiens (Human).